The sequence spans 190 residues: Protein GrpE (190 aa).

Disordered stretches follow at residues 1-22 (MAEE…GQTI) and 170-190 (EEGE…KPQS). Residues 181–190 (ARVKVGKPQS) are compositionally biased toward basic residues.

It belongs to the GrpE family. In terms of assembly, homodimer.

The protein resides in the cytoplasm. In terms of biological role, participates actively in the response to hyperosmotic and heat shock by preventing the aggregation of stress-denatured proteins, in association with DnaK and GrpE. It is the nucleotide exchange factor for DnaK and may function as a thermosensor. Unfolded proteins bind initially to DnaJ; upon interaction with the DnaJ-bound protein, DnaK hydrolyzes its bound ATP, resulting in the formation of a stable complex. GrpE releases ADP from DnaK; ATP binding to DnaK triggers the release of the substrate protein, thus completing the reaction cycle. Several rounds of ATP-dependent interactions between DnaJ, DnaK and GrpE are required for fully efficient folding. The polypeptide is Protein GrpE (Leptospira biflexa serovar Patoc (strain Patoc 1 / Ames)).